A 101-amino-acid chain; its full sequence is Chaperone modulatory protein CbpM (101 aa).

It belongs to the CbpM family.

In terms of biological role, interacts with CbpA and inhibits both the DnaJ-like co-chaperone activity and the DNA binding activity of CbpA. Together with CbpA, modulates the activity of the DnaK chaperone system. Does not inhibit the co-chaperone activity of DnaJ. This is Chaperone modulatory protein CbpM from Citrobacter koseri (strain ATCC BAA-895 / CDC 4225-83 / SGSC4696).